The following is a 637-amino-acid chain: Sodium-dependent phosphate transport protein 2A (637 aa).

Over 1–103 the chain is Cytoplasmic; the sequence is MMSYSERLGG…LAQVGTKLLK (103 aa). Residues Ser-14 and Ser-34 each carry the phosphoserine modification. A helical membrane pass occupies residues 104–125; that stretch reads VPLMLGFLYLFVCSLDVLSSAF. At 126 to 145 the chain is on the extracellular side; the sequence is QLAGGKVAGDIFKDNAILSN. A helical transmembrane segment spans residues 146 to 163; it reads PVAGLVVGILVTVLVQSS. Residues 164–216 are Cytoplasmic-facing; it reads STSTSIIVSMVSSGLLEVSSAIPIIMGSNIGTSVTNTIVALMQAGDRTDFRRA. Residues 217–236 form a helical membrane-spanning segment; that stretch reads FAGATVHDCFNWLSVLVLLP. 2 disulfide bridges follow: Cys-225–Cys-520 and Cys-306–Cys-334. Over 237–345 the chain is Extracellular; it reads LEAATGYLHH…HIFVDTGLPD (109 aa). Residues Asn-298 and Asn-328 are each glycosylated (N-linked (GlcNAc...) asparagine). Residues 346–368 traverse the membrane as a helical segment; it reads LAVGLILLAGSLVVLCTCLILLV. Residues 369–410 are Cytoplasmic-facing; sequence KMLNSLLKGQVANVIQKVINTDFPAPFTWVTGYFAMVVGASM. The helical transmembrane segment at 411 to 434 threads the bilayer; the sequence is TFVVQSSSVFTSAITPLIGLGVIS. Residues 435–464 lie on the Extracellular side of the membrane; the sequence is IERAYPLTLGSNIGTTTTAILAALASPREK. Residues 465–485 traverse the membrane as a helical segment; the sequence is LSSSFQIALCHFFFNISGILL. Residues 486 to 511 lie on the Cytoplasmic side of the membrane; the sequence is WYPLPCTRLPIRMAKALGKRTAKYRW. Residue Thr-506 is modified to Phosphothreonine; by PKC. The chain crosses the membrane as a helical span at residues 512–532; it reads FAVLYLLVCFLLLPSLVFGIS. Residues 533-537 lie on the Extracellular side of the membrane; the sequence is MAGWQ. A helical membrane pass occupies residues 538–559; it reads AMVGVGTPFGALLAFVVLVNVL. The Cytoplasmic segment spans residues 560–637; sequence QSRSPGHLPK…LPAHHNATRL (78 aa). The residue at position 605 (Ser-605) is a Phosphoserine. The residue at position 621 (Thr-621) is a Phosphothreonine. Ser-623 bears the Phosphoserine mark.

This sequence belongs to the SLC34A transporter family. Interacts via its C-terminal region with NHERF4. Interacts with NHERF1. Interacts with TMEM174; regulates SLC34A1 internalization by PTH and FGF23. In terms of tissue distribution, kidney.

The protein localises to the apical cell membrane. It localises to the cell membrane. It catalyses the reaction 3 Na(+)(out) + phosphate(out) = 3 Na(+)(in) + phosphate(in). Its activity is regulated as follows. Transport activity is significantly increased in response to dietary phosphate deprivation. In terms of biological role, involved in actively transporting phosphate into cells via Na(+) cotransport in the renal brush border membrane. The cotransport has a Na(+):Pi stoichiometry of 3:1 and is electrogenic. The polypeptide is Sodium-dependent phosphate transport protein 2A (Rattus norvegicus (Rat)).